The primary structure comprises 37 residues: Peptide encoded by miPEP164a (37 aa).

In terms of biological role, regulatory peptide encoded by the primary transcript (pri-miR164a) of the microRNA miR164a that enhances the accumulation of its corresponding mature miRNA. Acts probably as a transcriptional activator of its corresponding pri-miRNA. The chain is Peptide encoded by miPEP164a from Arabidopsis thaliana (Mouse-ear cress).